The sequence spans 219 residues: Ribosome maturation factor RimP (219 aa).

The disordered stretch occupies residues 195–219 (EGRIPGDDLGAEPEDVASTETQEKK).

The protein belongs to the RimP family.

It is found in the cytoplasm. Functionally, required for maturation of 30S ribosomal subunits. This is Ribosome maturation factor RimP from Brucella abortus (strain S19).